A 120-amino-acid chain; its full sequence is Succinate dehydrogenase assembly factor 3, mitochondrial (120 aa).

Residues methionine 1–leucine 36 constitute a mitochondrion transit peptide.

This sequence belongs to the complex I LYR family. SDHAF3 subfamily. As to quaternary structure, interacts with SdhB within an SdhA-SdhB subcomplex.

It localises to the mitochondrion matrix. Plays an essential role in the assembly of succinate dehydrogenase (SDH), an enzyme complex (also referred to as respiratory complex II) that is a component of both the tricarboxylic acid (TCA) cycle and the mitochondrial electron transport chain, and which couples the oxidation of succinate to fumarate with the reduction of ubiquinone (coenzyme Q) to ubiquinol. Promotes maturation of the iron-sulfur protein subunit SdhB of the SDH catalytic dimer, protecting it from the deleterious effects of oxidants. The protein is Succinate dehydrogenase assembly factor 3, mitochondrial of Drosophila melanogaster (Fruit fly).